The chain runs to 190 residues: Nascent polypeptide-associated complex subunit alpha (190 aa).

Disordered stretches follow at residues 20 to 42 and 123 to 155; these read FDSDDAGADVHASDKVASRAERK and SLQNSSASGAEKKVEEEEEDDDSPIDEEGVDAK. Positions 30–40 are enriched in basic and acidic residues; it reads HASDKVASRAE. An NAC-A/B domain is found at 37-102; it reads SRAERKSRKA…AKAEDMSQLA (66 aa). Acidic residues predominate over residues 138–151; sequence EEEEDDDSPIDEEG. The region spanning 152–189 is the UBA domain; that stretch reads VDAKDIDLVMQQVSCSRRKAVKALKESNGDLINAIMNA.

Belongs to the NAC-alpha family. As to quaternary structure, part of the nascent polypeptide-associated complex (NAC), consisting of EGD2 and EGD1. NAC associates with ribosomes via EGD1.

The protein localises to the cytoplasm. It localises to the nucleus. Component of the nascent polypeptide-associated complex (NAC), a dynamic component of the ribosomal exit tunnel, protecting the emerging polypeptides from interaction with other cytoplasmic proteins to ensure appropriate nascent protein targeting. The NAC complex also promotes mitochondrial protein import by enhancing productive ribosome interactions with the outer mitochondrial membrane and blocks the inappropriate interaction of ribosomes translating non-secretory nascent polypeptides with translocation sites in the membrane of the endoplasmic reticulum. EGD2 may also be involved in transcription regulation. The chain is Nascent polypeptide-associated complex subunit alpha (EGD2) from Mycosarcoma maydis (Corn smut fungus).